Reading from the N-terminus, the 295-residue chain is Porphobilinogen deaminase (295 aa).

The residue at position 241 (Cys241) is an S-(dipyrrolylmethanemethyl)cysteine.

This sequence belongs to the HMBS family. Monomer. The cofactor is dipyrromethane.

The enzyme catalyses 4 porphobilinogen + H2O = hydroxymethylbilane + 4 NH4(+). It participates in porphyrin-containing compound metabolism; protoporphyrin-IX biosynthesis; coproporphyrinogen-III from 5-aminolevulinate: step 2/4. Its function is as follows. Tetrapolymerization of the monopyrrole PBG into the hydroxymethylbilane pre-uroporphyrinogen in several discrete steps. The sequence is that of Porphobilinogen deaminase from Lachnospira eligens (strain ATCC 27750 / DSM 3376 / VPI C15-48 / C15-B4) (Eubacterium eligens).